The chain runs to 460 residues: Ribosomal protein uS12 methylthiotransferase RimO (460 aa).

The MTTase N-terminal domain maps to 16–130; it reads NKIHFISLGC…ILSAIESKES (115 aa). Positions 25, 61, 93, 164, 168, and 171 each coordinate [4Fe-4S] cluster. Residues 150–382 enclose the Radical SAM core domain; sequence STPKHYAYLK…SQTQKKNVEK (233 aa). In terms of domain architecture, TRAM spans 385-455; that stretch reads KQFVGKIVEA…GYDLVGRVVN (71 aa).

It belongs to the methylthiotransferase family. RimO subfamily. It depends on [4Fe-4S] cluster as a cofactor.

The protein resides in the cytoplasm. It catalyses the reaction L-aspartate(89)-[ribosomal protein uS12]-hydrogen + (sulfur carrier)-SH + AH2 + 2 S-adenosyl-L-methionine = 3-methylsulfanyl-L-aspartate(89)-[ribosomal protein uS12]-hydrogen + (sulfur carrier)-H + 5'-deoxyadenosine + L-methionine + A + S-adenosyl-L-homocysteine + 2 H(+). Functionally, catalyzes the methylthiolation of an aspartic acid residue of ribosomal protein uS12. This is Ribosomal protein uS12 methylthiotransferase RimO from Chlamydia abortus (strain DSM 27085 / S26/3) (Chlamydophila abortus).